We begin with the raw amino-acid sequence, 288 residues long: Energy-coupling factor transporter ATP-binding protein EcfA2 (288 aa).

Positions Ile2–Gly244 constitute an ABC transporter domain. Position 39-46 (Gly39–Ser46) interacts with ATP. The Proton acceptor role is filled by Glu170.

The protein belongs to the ABC transporter superfamily. Energy-coupling factor EcfA family. In terms of assembly, forms a stable energy-coupling factor (ECF) transporter complex composed of 2 membrane-embedded substrate-binding proteins (S component), 2 ATP-binding proteins (A component) and 2 transmembrane proteins (T component). In L.lactis forms a stable complex with EcfA' and EcfT and substrate-binding components. In E.coli forms a stable complex with EcfA, EcfT and individually with 3 tested substrate-binding components (BioY, NiaX and ThiT) with a stoichiometry of 1.1:1:1. The core ECF complex interacts with a number of substrate-specific binding components, including BioY, BioY2, HmpT, NiaX, PanT, QueT, RibU and ThiT.

It is found in the cell membrane. ATP-binding (A) component of a common energy-coupling factor (ECF) ABC-transporter complex. Unlike classic ABC transporters this ECF transporter provides the energy necessary to transport a number of different substrates. In this organism these probably include biotin, thiamine precursor, niacin, pantothenic acid, queuosine precursor, riboflavin and thiamine. Uptake of niacin or riboflavin into proteosomes containing EcfA1A2T and Niax or RibU has been demonstrated. Uptake requires hydrolyzable Mg-ATP and is substrate-specific; NiaX-containing proteosomes did not transport riboflavin. This chain is Energy-coupling factor transporter ATP-binding protein EcfA2, found in Lactococcus lactis subsp. cremoris (strain MG1363).